Consider the following 480-residue polypeptide: Probable tRNA N6-adenosine threonylcarbamoyltransferase, mitochondrial (480 aa).

Residues 1–86 (MVRLFLTLSP…NPNFDDNLVV (86 aa)) constitute a mitochondrion transit peptide. A divalent metal cation contacts are provided by His194 and His198. Residues 217–221 (LISGG), Asp250, Gly265, Glu269, 373–374 (SN), and Thr401 each bind substrate. Position 402 (Asp402) interacts with a divalent metal cation.

The protein belongs to the KAE1 / TsaD family. As to quaternary structure, homodimer. The cofactor is a divalent metal cation. In terms of tissue distribution, expressed in young developing leaves, roots, flowers and siliques.

It localises to the mitochondrion inner membrane. It carries out the reaction L-threonylcarbamoyladenylate + adenosine(37) in tRNA = N(6)-L-threonylcarbamoyladenosine(37) in tRNA + AMP + H(+). Functionally, required for the formation of a threonylcarbamoyl group on adenosine at position 37 (t(6)A37) in mitochondrial tRNAs that read codons beginning with adenine. Probably involved in the transfer of the threonylcarbamoyl moiety of threonylcarbamoyl-AMP (TC-AMP) to the N6 group of A37. Involved in mitochondrial genome maintenance. May have a role in embryonic development in plants. The chain is Probable tRNA N6-adenosine threonylcarbamoyltransferase, mitochondrial from Arabidopsis thaliana (Mouse-ear cress).